Consider the following 35-residue polypeptide: Cecropin (35 aa).

Residue Ile-35 is modified to Isoleucine amide.

Belongs to the cecropin family.

The protein localises to the secreted. In terms of biological role, cecropins have lytic and antibacterial activity against several Gram-positive and Gram-negative bacteria. In Bombyx mori (Silk moth), this protein is Cecropin.